The following is a 415-amino-acid chain: Serine hydroxymethyltransferase 3 (415 aa).

(6S)-5,6,7,8-tetrahydrofolate contacts are provided by residues Leu122 and 126-128; that span reads GHL. Lys230 bears the N6-(pyridoxal phosphate)lysine mark.

It belongs to the SHMT family. In terms of assembly, homodimer. Pyridoxal 5'-phosphate is required as a cofactor.

It localises to the cytoplasm. It catalyses the reaction (6R)-5,10-methylene-5,6,7,8-tetrahydrofolate + glycine + H2O = (6S)-5,6,7,8-tetrahydrofolate + L-serine. It participates in one-carbon metabolism; tetrahydrofolate interconversion. Its pathway is amino-acid biosynthesis; glycine biosynthesis; glycine from L-serine: step 1/1. Functionally, catalyzes the reversible interconversion of serine and glycine with tetrahydrofolate (THF) serving as the one-carbon carrier. This reaction serves as the major source of one-carbon groups required for the biosynthesis of purines, thymidylate, methionine, and other important biomolecules. Also exhibits THF-independent aldolase activity toward beta-hydroxyamino acids, producing glycine and aldehydes, via a retro-aldol mechanism. This Burkholderia lata (strain ATCC 17760 / DSM 23089 / LMG 22485 / NCIMB 9086 / R18194 / 383) protein is Serine hydroxymethyltransferase 3.